The primary structure comprises 329 residues: Terpene synthase 7 (329 aa).

The DDxx(x)D/E motif motif lies at 99 to 104 (DDLYLE). The short motif at 230–238 (NDIHSFNKE) is the NDxxSxxxD/E motif element.

It belongs to the terpene synthase family.

Functionally, terpene synthase that converts its substrate farnesyl diphosphate (FPP) into 6 yet unidentified sesquiterpenes. The chain is Terpene synthase 7 from Dictyostelium purpureum (Slime mold).